Reading from the N-terminus, the 72-residue chain is Translation initiation factor IF-1 (72 aa).

The S1-like domain occupies 1–72 (MSKEELIEFE…TKGRITYRFK (72 aa)).

The protein belongs to the IF-1 family. Component of the 30S ribosomal translation pre-initiation complex which assembles on the 30S ribosome in the order IF-2 and IF-3, IF-1 and N-formylmethionyl-tRNA(fMet); mRNA recruitment can occur at any time during PIC assembly.

Its subcellular location is the cytoplasm. In terms of biological role, one of the essential components for the initiation of protein synthesis. Stabilizes the binding of IF-2 and IF-3 on the 30S subunit to which N-formylmethionyl-tRNA(fMet) subsequently binds. Helps modulate mRNA selection, yielding the 30S pre-initiation complex (PIC). Upon addition of the 50S ribosomal subunit IF-1, IF-2 and IF-3 are released leaving the mature 70S translation initiation complex. This Hyphomonas neptunium (strain ATCC 15444) protein is Translation initiation factor IF-1.